The chain runs to 482 residues: Glutamyl-tRNA(Gln) amidotransferase subunit A (482 aa).

Active-site charge relay system residues include Lys-80 and Ser-159. The Acyl-ester intermediate role is filled by Ser-183.

Belongs to the amidase family. GatA subfamily. Heterotrimer of A, B and C subunits.

The catalysed reaction is L-glutamyl-tRNA(Gln) + L-glutamine + ATP + H2O = L-glutaminyl-tRNA(Gln) + L-glutamate + ADP + phosphate + H(+). In terms of biological role, allows the formation of correctly charged Gln-tRNA(Gln) through the transamidation of misacylated Glu-tRNA(Gln) in organisms which lack glutaminyl-tRNA synthetase. The reaction takes place in the presence of glutamine and ATP through an activated gamma-phospho-Glu-tRNA(Gln). In Neorickettsia sennetsu (strain ATCC VR-367 / Miyayama) (Ehrlichia sennetsu), this protein is Glutamyl-tRNA(Gln) amidotransferase subunit A.